A 177-amino-acid chain; its full sequence is von Ebner gland protein 1 (177 aa).

Residues 1 to 18 (MKALLLTFGLSLLAALQA) form the signal peptide. Cys80 and Cys172 are disulfide-bonded.

This sequence belongs to the calycin superfamily. Lipocalin family. As to quaternary structure, homodimer.

The protein resides in the secreted. Its function is as follows. Could play a role in taste reception. Could be necessary for the concentration and delivery of sapid molecules in the gustatory system. This chain is von Ebner gland protein 1 (Vegp1), found in Rattus norvegicus (Rat).